Here is an 897-residue protein sequence, read N- to C-terminus: 3'-5' exonuclease DinG (897 aa).

An Exonuclease domain is found at 8 to 161 (VVDLETTGNQ…DEDAATTAKL (154 aa)). The 256-residue stretch at 241 to 496 (SKAVDQLGLT…KAIDQLEKQR (256 aa)) folds into the Helicase ATP-binding domain. 276-283 (ASLGSGKS) provides a ligand contact to ATP. The DEAH box motif lies at 448-451 (DEAH). A Helicase C-terminal domain is found at 703 to 893 (NIDEYVASIV…QFGKLLRQIQ (191 aa)).

This sequence belongs to the helicase family. DinG subfamily. Type 2 sub-subfamily. In terms of assembly, monomer in solution.

The nuclease activity is inhibited by ATP or ADP. In terms of biological role, 3'-5' exonuclease acting on single-stranded DNA (ssDNA) and RNA (ssRNA) substrates. Displays ssDNA-stimulated ATPase activity, but lacks helicase activity. The polypeptide is 3'-5' exonuclease DinG (Staphylococcus aureus (strain MRSA252)).